The chain runs to 324 residues: Spheroidene monooxygenase (324 aa).

The disordered stretch occupies residues glycine 226 to alanine 324. 2 stretches are compositionally biased toward low complexity: residues proline 248–proline 278 and valine 287–glycine 313.

It belongs to the CrtA family. Heme is required as a cofactor.

It carries out the reaction spheroidene + 4 reduced [2Fe-2S]-[ferredoxin] + 2 O2 + 4 H(+) = spheroiden-2-one + 4 oxidized [2Fe-2S]-[ferredoxin] + 3 H2O. It catalyses the reaction spheroidene + 2 reduced [2Fe-2S]-[ferredoxin] + O2 + 2 H(+) = 2-hydroxyspheroidene + 2 oxidized [2Fe-2S]-[ferredoxin] + H2O. The catalysed reaction is 2-hydroxyspheroidene + 2 reduced [2Fe-2S]-[ferredoxin] + O2 + 2 H(+) = 2,2-dihydroxyspheroidene + 2 oxidized [2Fe-2S]-[ferredoxin] + H2O. The enzyme catalyses 2,2-dihydroxyspheroidene = spheroiden-2-one + H2O. Its pathway is carotenoid biosynthesis; spheroidene biosynthesis. Its function is as follows. Involved in the biosynthesis of the carotenoid spheroidene. Catalyzes the introduction of one keto group at the C-2 position of spheroidene. In vitro, can use nonnative substrates and produce oxocarotenoids with a hydroxy and/or a keto group, derived from neurosporene, lycopene, 3,4-didehydrolycopene or 3,4,3',4'-tetradehydrolycopene. The polypeptide is Spheroidene monooxygenase (Cereibacter sphaeroides (strain ATCC 17023 / DSM 158 / JCM 6121 / CCUG 31486 / LMG 2827 / NBRC 12203 / NCIMB 8253 / ATH 2.4.1.) (Rhodobacter sphaeroides)).